Consider the following 734-residue polypeptide: MALRSPKSSRGLSQDPTTRRIWFGIATAHDFESHDGMTEERLYQNIFASHLGQLAIIFLWTSGNLFHVAWQGNSEARIKDPLHVRPIAHAIWDPHFGQPAVEAFARGGGLGPVNIAYPGVYQRWYTIGMRTDQDLYTGAFSLLIVSTLFLVAGWLHLEPKWAPSISWFKNAESRLNHHLSGLFGVSSLARAGHLVHVAIPESRGGHVRWGNLLSASPHPQGLGPLSAGQWGVYARDVDSSSHLFNTSQGAGTAIPTFTGGFHPQTQSPWLTDIAHHHLAIAVVFIIAGHTYRTNFGIGHSIGGALEAHIPPGGRLGRGHQGLYDTINNSLHFQLGLALASLGVVTSLVAQHMYSLPAYAFIAQDFTTQAALYTHHQYIAGFIMTGAFAHGAIFLTRDYSPERGRGNVLARVLEHKEAIISHLSWASLFLGFHTLGLYVHNDVMLAFGTPEKQILIEPVFAQWIQSAHGKASYGFDVLLSSPNDPAFNAGRSIWLPGRLDAIDNNSNSLFLTIGPGDFPVHHAIASGLHTTTLILSKGALDARGSKLMPDKKEFGYGFPCDGPGRGGTCDISAWDAFYPAVFWMLNTIGWVTLHWHWKHITLWQGNVAQLDESSTYLMGWSRDYSWLNSSQLINGYNPFGTNSLSVWAWMFSFGHLVWATGFMFLIPRRGYWQELIETLARAHERTPLANLVRWGDKPVALSIVQARLVGLAHFSVGYIFTYAAFPIPSTAGKFG.

8 helical membrane-spanning segments follow: residues 46-69 (IFAS…FHVA), 135-158 (LYTG…LHLE), 175-199 (LNHH…HVAI), 273-291 (IAHH…GHTY), 330-353 (LHFQ…QHMY), 369-395 (AALY…IFLT), 417-439 (AIIS…LYVH), and 517-535 (FPVH…LILS). Positions 559 and 568 each coordinate [4Fe-4S] cluster. A run of 2 helical transmembrane segments spans residues 575–596 (AFYP…HWHW) and 643–665 (LSVW…MFLI). The chlorophyll a site is built by H654, M662, and Y670. W671 is a phylloquinone binding site. The chain crosses the membrane as a helical span at residues 707-727 (LVGLAHFSVGYIFTYAAFPIP).

The protein belongs to the PsaA/PsaB family. As to quaternary structure, the PsaA/B heterodimer binds the P700 chlorophyll special pair and subsequent electron acceptors. PSI consists of a core antenna complex that captures photons, and an electron transfer chain that converts photonic excitation into a charge separation. The eukaryotic PSI reaction center is composed of at least 11 subunits. The cofactor is P700 is a chlorophyll a/chlorophyll a' dimer, A0 is one or more chlorophyll a, A1 is one or both phylloquinones and FX is a shared 4Fe-4S iron-sulfur center..

The protein localises to the plastid. Its subcellular location is the chloroplast thylakoid membrane. The enzyme catalyses reduced [plastocyanin] + hnu + oxidized [2Fe-2S]-[ferredoxin] = oxidized [plastocyanin] + reduced [2Fe-2S]-[ferredoxin]. In terms of biological role, psaA and PsaB bind P700, the primary electron donor of photosystem I (PSI), as well as the electron acceptors A0, A1 and FX. PSI is a plastocyanin-ferredoxin oxidoreductase, converting photonic excitation into a charge separation, which transfers an electron from the donor P700 chlorophyll pair to the spectroscopically characterized acceptors A0, A1, FX, FA and FB in turn. Oxidized P700 is reduced on the lumenal side of the thylakoid membrane by plastocyanin. This Selaginella uncinata (Blue spike-moss) protein is Photosystem I P700 chlorophyll a apoprotein A2.